Reading from the N-terminus, the 257-residue chain is MVLIRVLANLLILQLSYAQKSSELVVGGDECNINEHRFLVLVYTDGIQCGGTLINKEWMLTAAHCDGKKMKLQFGLHSKNVPNKDKQTRVPKKKYFFPCSKNFTKWDKDIMLIRLNHPVNNSTHIAPLSLPSKPPSQDTVCNIMGWGTISPTKEIYPDVPHCANINIVDHAVCRAFYPGLLEKSKTLCAGILEGGKDICQGDSGGPLICNGQIQGIVSVGGNPCAEPRVPAIYTKVFDHLDWIKSIIAGNTAATCPL.

Residues 1–18 (MVLIRVLANLLILQLSYA) form the signal peptide. The propeptide occupies 19-24 (QKSSEL). The Peptidase S1 domain occupies 25 to 248 (VVGGDECNIN…HLDWIKSIIA (224 aa)). 5 disulfide bridges follow: cysteine 31-cysteine 162, cysteine 49-cysteine 65, cysteine 141-cysteine 209, cysteine 173-cysteine 188, and cysteine 199-cysteine 224. Histidine 64 (charge relay system) is an active-site residue. N-linked (GlcNAc...) asparagine glycosylation occurs at asparagine 102. Aspartate 109 (charge relay system) is an active-site residue. Asparagine 120 and asparagine 121 each carry an N-linked (GlcNAc...) asparagine glycan. Serine 203 acts as the Charge relay system in catalysis.

It belongs to the peptidase S1 family. Snake venom subfamily. As to quaternary structure, monomer. As to expression, expressed by the venom gland.

The protein localises to the secreted. In terms of biological role, snake venom serine protease that may act in the hemostasis system of the prey. This chain is Snake venom serine protease KN9, found in Trimeresurus stejnegeri (Chinese green tree viper).